The chain runs to 280 residues: UPF0273 protein SSO1861 (280 aa).

The KaiC domain occupies 2–246 (KRVKTYIPGL…YLKISNWSVS (245 aa)). 29–36 (GGPGTGKS) contributes to the ATP binding site.

Belongs to the UPF0273 family.

The sequence is that of UPF0273 protein SSO1861 from Saccharolobus solfataricus (strain ATCC 35092 / DSM 1617 / JCM 11322 / P2) (Sulfolobus solfataricus).